The chain runs to 347 residues: Ataxin-7-like protein 3 (347 aa).

Residues 84–105 (CVCPNCSRSIAASRFAPHLEKC) form an SGF11-type zinc finger. A compositionally biased stretch (low complexity) spans 116 to 125 (ANRRIANSNN). The tract at residues 116-184 (ANRRIANSNN…GELSNSDPFK (69 aa)) is disordered. Residues Ser-129 and Ser-131 each carry the phosphoserine modification. The span at 132–141 (DQEDNDDIND) shows a compositional bias: acidic residues. Residues 196-263 (LGPEELRSLL…SLDNDSFDMT (68 aa)) enclose the SCA7 domain. The span at 275–288 (DGSSDLSPSDSGSS) shows a compositional bias: low complexity. The interval 275–347 (DGSSDLSPSD…PTPSIYDDIN (73 aa)) is disordered. 3 positions are modified to phosphoserine: Ser-278, Ser-281, and Ser-326.

It belongs to the SGF11 family. In terms of assembly, component of some SAGA transcription coactivator-HAT complexes, at least composed of ATXN7, ATXN7L3, ENY2, GCN5L2, SUPT3H, TAF10, TRRAP and USP22. Within the SAGA complex, ENY2, ATXN7, ATXN7L3, and USP22 form an additional subcomplex of SAGA called the DUB module (deubiquitination module). Interacts directly with ENY2 and USP22.

The protein localises to the nucleus. Functionally, component of the transcription regulatory histone acetylation (HAT) complex SAGA, a multiprotein complex that activates transcription by remodeling chromatin and mediating histone acetylation and deubiquitination. Within the SAGA complex, participates in a subcomplex that specifically deubiquitinates both histones H2A and H2B. The SAGA complex is recruited to specific gene promoters by activators such as MYC, where it is required for transcription. Required for nuclear receptor-mediated transactivation. Within the complex, it is required to recruit USP22 and ENY2 into the SAGA complex. Regulates H2B monoubiquitination (H2Bub1) levels. Affects subcellular distribution of ENY2, USP22 and ATXN7L3B. The polypeptide is Ataxin-7-like protein 3 (Homo sapiens (Human)).